We begin with the raw amino-acid sequence, 516 residues long: Squalene epoxidase 5 (516 aa).

2 consecutive transmembrane segments (helical) span residues 3 to 23 and 45 to 65; these read FTNVCLWTLLAFMLTWTVFYV and ATDVIIVGAGVGGSALAYALA. FAD is bound by residues 55–56, 75–76, Arg-83, Phe-88, Arg-156, Val-172, Asp-335, and Met-348; these read VG and ER. A helical membrane pass occupies residues 446 to 466; the sequence is LIYHLCAITLSSIGHLLSPFP.

This sequence belongs to the squalene monooxygenase family. It depends on FAD as a cofactor. In terms of tissue distribution, expressed in seedlings, leaves, stems and inflorescences. Detected in siliques.

It localises to the membrane. The enzyme catalyses squalene + reduced [NADPH--hemoprotein reductase] + O2 = (S)-2,3-epoxysqualene + oxidized [NADPH--hemoprotein reductase] + H2O + H(+). Its pathway is terpene metabolism; lanosterol biosynthesis; lanosterol from farnesyl diphosphate: step 2/3. Catalyzes the stereospecific oxidation of squalene to (S)-2,3-epoxysqualene, and is considered to be a rate-limiting enzyme in steroid biosynthesis. This is Squalene epoxidase 5 (SQE5) from Arabidopsis thaliana (Mouse-ear cress).